Here is a 585-residue protein sequence, read N- to C-terminus: Arginine--tRNA ligase (585 aa).

Residues 131–141 (ANPTGPMHVGH) carry the 'HIGH' region motif.

It belongs to the class-I aminoacyl-tRNA synthetase family. Monomer.

The protein localises to the cytoplasm. The catalysed reaction is tRNA(Arg) + L-arginine + ATP = L-arginyl-tRNA(Arg) + AMP + diphosphate. The protein is Arginine--tRNA ligase of Brucella anthropi (strain ATCC 49188 / DSM 6882 / CCUG 24695 / JCM 21032 / LMG 3331 / NBRC 15819 / NCTC 12168 / Alc 37) (Ochrobactrum anthropi).